The chain runs to 144 residues: Putative pre-16S rRNA nuclease (144 aa).

It belongs to the YqgF nuclease family.

The protein resides in the cytoplasm. Functionally, could be a nuclease involved in processing of the 5'-end of pre-16S rRNA. The protein is Putative pre-16S rRNA nuclease of Oenococcus oeni (strain ATCC BAA-331 / PSU-1).